Here is a 101-residue protein sequence, read N- to C-terminus: uncharacterized protein (101 aa).

An N-terminal signal peptide occupies residues 1–25; that stretch reads MISIPFRSTMSRTLVFIILPTVLSC.

This is an uncharacterized protein from Saccharomyces cerevisiae (strain ATCC 204508 / S288c) (Baker's yeast).